Reading from the N-terminus, the 209-residue chain is uncharacterized protein (209 aa).

This is an uncharacterized protein from Caldicellulosiruptor saccharolyticus (Caldocellum saccharolyticum).